Reading from the N-terminus, the 291-residue chain is Aspartate carbamoyltransferase catalytic subunit (291 aa).

Positions 47 and 48 each coordinate carbamoyl phosphate. L-aspartate is bound at residue Lys-75. Positions 97, 126, and 129 each coordinate carbamoyl phosphate. L-aspartate contacts are provided by Arg-159 and Arg-213. Carbamoyl phosphate is bound by residues Gly-251 and Pro-252.

This sequence belongs to the aspartate/ornithine carbamoyltransferase superfamily. ATCase family. Heterododecamer (2C3:3R2) of six catalytic PyrB chains organized as two trimers (C3), and six regulatory PyrI chains organized as three dimers (R2).

The catalysed reaction is carbamoyl phosphate + L-aspartate = N-carbamoyl-L-aspartate + phosphate + H(+). It participates in pyrimidine metabolism; UMP biosynthesis via de novo pathway; (S)-dihydroorotate from bicarbonate: step 2/3. Its function is as follows. Catalyzes the condensation of carbamoyl phosphate and aspartate to form carbamoyl aspartate and inorganic phosphate, the committed step in the de novo pyrimidine nucleotide biosynthesis pathway. This is Aspartate carbamoyltransferase catalytic subunit from Aquifex aeolicus (strain VF5).